Reading from the N-terminus, the 235-residue chain is tRNA pseudouridine synthase B (235 aa).

The active-site Nucleophile is the Asp45.

Belongs to the pseudouridine synthase TruB family. Type 1 subfamily.

The catalysed reaction is uridine(55) in tRNA = pseudouridine(55) in tRNA. In terms of biological role, responsible for synthesis of pseudouridine from uracil-55 in the psi GC loop of transfer RNAs. In Chlamydia felis (strain Fe/C-56) (Chlamydophila felis), this protein is tRNA pseudouridine synthase B.